A 156-amino-acid chain; its full sequence is Endogenous retrovirus group K member 25 Pro protein (156 aa).

In terms of domain architecture, Peptidase A2 spans 21–96; the sequence is FEGLVDTGAD…IPLNLWGRDL (76 aa). Asp-26 is a catalytic residue. The 46-residue stretch at 111-156 folds into the G-patch domain; that stretch reads YSPTSQKIMTKMGYIPGKGLGKNEDGIKIPVEAKINQKREGIGYPF.

This sequence belongs to the peptidase A2 family. HERV class-II K(HML-2) subfamily. In terms of assembly, active as a homodimer. Post-translationally, autoproteolytically processed at the N-terminus. Expected C-terminal autoprocessing not detected. The sequence shown is that of the processed Pro protein.

It catalyses the reaction Processing at the authentic HIV-1 PR recognition site and release of the mature p17 matrix and the p24 capsid protein, as a result of the cleavage of the -SQNY-|-PIVQ- cleavage site.. In terms of biological role, retroviral proteases have roles in processing of the primary translation products and the maturation of the viral particle. Endogenous Pro proteins may have kept, lost or modified their original function during evolution. This endogenous protein has retained most of the characteristics of retroviral proteases. The chain is Endogenous retrovirus group K member 25 Pro protein (ERVK-25) from Homo sapiens (Human).